Here is a 552-residue protein sequence, read N- to C-terminus: Putative E3 ubiquitin-protein ligase ARI6 (552 aa).

The TRIAD supradomain stretch occupies residues 129–343 (REFTCGICFE…GGYYACNRYE (215 aa)). Residues cysteine 133, cysteine 136, cysteine 150, histidine 152, cysteine 155, cysteine 158, cysteine 178, cysteine 183, cysteine 222, cysteine 227, cysteine 245, cysteine 247, cysteine 252, cysteine 255, histidine 260, cysteine 265, cysteine 292, and cysteine 295 each coordinate Zn(2+). The segment at 133-183 (CGICFESYPLEETISVSCGHPFCATCWTGYISTSINDGPGCLMLKCPYPCC) adopts an RING-type 1 zinc-finger fold. The IBR-type zinc-finger motif lies at 202 to 265 (ERYYRYFLRS…SEEAHRPVDC (64 aa)). The RING-type 2; atypical zinc-finger motif lies at 292 to 322 (CPKCKRPIEKNHGCMHMTCTPPCKFEFCWLC). The active site involves cysteine 305. Zn(2+) is bound by residues cysteine 310, cysteine 314, cysteine 319, cysteine 322, histidine 329, and cysteine 339. Residues 518–552 (HAASSKPANCKPSSNTKDGGKGKKEALTMAGSAET) are disordered. Residues 519 to 534 (AASSKPANCKPSSNTK) show a composition bias toward polar residues.

The protein belongs to the RBR family. Ariadne subfamily. Zn(2+) is required as a cofactor.

The catalysed reaction is [E2 ubiquitin-conjugating enzyme]-S-ubiquitinyl-L-cysteine + [acceptor protein]-L-lysine = [E2 ubiquitin-conjugating enzyme]-L-cysteine + [acceptor protein]-N(6)-ubiquitinyl-L-lysine.. It participates in protein modification; protein ubiquitination. Functionally, might act as an E3 ubiquitin-protein ligase, or as part of E3 complex, which accepts ubiquitin from specific E2 ubiquitin-conjugating enzymes and then transfers it to substrates. In Arabidopsis thaliana (Mouse-ear cress), this protein is Putative E3 ubiquitin-protein ligase ARI6 (ARI6).